Here is a 175-residue protein sequence, read N- to C-terminus: Large ribosomal subunit protein uL10 (175 aa).

The protein belongs to the universal ribosomal protein uL10 family. As to quaternary structure, part of the ribosomal stalk of the 50S ribosomal subunit. The N-terminus interacts with L11 and the large rRNA to form the base of the stalk. The C-terminus forms an elongated spine to which L12 dimers bind in a sequential fashion forming a multimeric L10(L12)X complex.

In terms of biological role, forms part of the ribosomal stalk, playing a central role in the interaction of the ribosome with GTP-bound translation factors. The sequence is that of Large ribosomal subunit protein uL10 from Prochlorococcus marinus (strain MIT 9301).